The sequence spans 636 residues: MNSNSTIGRTTLGESDTISLSFSEPSSSLNSRSTDVVFASTSTLVPQQGSLTSLPPVSSTATPTYYSTSLTYDETLHTSIDVSSTSTLVSSTDSSSSSEQDTYSSQYDPATSSYSIITPSMSIFSSTSPMSSSSSITSEWSSLTSTTPTLSSSATSLSSSWSSLSSPSSLLVSSSLSLSLSSSYSDTKLFSFDSRSSIFSPSTPTVISPSYTYLSSISATSFQITTTSELSSSWFSTISSPSTTSNKDTTFPSSSRNTSTSFYSSSLSSTNDFSTISKSSKLSPSASSSTVSISTISVPTSSSVSSSSSKVPSNRPSSSSSSDDTTSAYSSTYTFQSLQSTTSSSIPPTTQTPSTSTISTSPIPTSSQVFNTVAISSSEDSKTIYYFYTQTYDITDSSTTFVTGLPTTIAVAKSEVTSFSAPSSTITADMSFYQHWLDGSLDNNKNQGTSKTNTGTIVGSVVGSVGGILICVLVVWFMLVRKRKAKRHFKENDSFCHEIGRRTGFPTTAQAKEASLQAQDSGSQQRNTETASANNPFSNEFNFKARGNPPPVPPPRNVTAMNGSFQNMRSNFMDQENRFSYGSSFTYSSLGSSTQGGFSTLSSNSIRLGRGLDNDISHDERNTVQNNSQGFLREII.

Residues 1–18 (MNSNSTIGRTTLGESDTI) are compositionally biased toward polar residues. Disordered regions lie at residues 1-33 (MNSNSTIGRTTLGESDTISLSFSEPSSSLNSRS), 87-109 (TLVSSTDSSSSSEQDTYSSQYDP), 238-271 (ISSPSTTSNKDTTFPSSSRNTSTSFYSSSLSSTN), 299-326 (PTSSSVSSSSSKVPSNRPSSSSSSDDTT), and 339-362 (QSTTSSSIPPTTQTPSTSTISTSP). A glycan (N-linked (GlcNAc...) asparagine) is linked at Asn-4. 2 stretches are compositionally biased toward low complexity: residues 19 to 33 (SLSFSEPSSSLNSRS) and 87 to 108 (TLVSSTDSSSSSEQDTYSSQYD). N-linked (GlcNAc...) asparagine glycosylation occurs at Asn-257. The chain crosses the membrane as a helical span at residues 457–477 (IVGSVVGSVGGILICVLVVWF). A glycan (N-linked (GlcNAc...) asparagine) is linked at Asn-492. Residues 510–541 (QAKEASLQAQDSGSQQRNTETASANNPFSNEF) show a composition bias toward polar residues. A disordered region spans residues 510–551 (QAKEASLQAQDSGSQQRNTETASANNPFSNEFNFKARGNPPP). Residue Lys-512 forms a Glycyl lysine isopeptide (Lys-Gly) (interchain with G-Cter in ubiquitin) linkage. 3 N-linked (GlcNAc...) asparagine glycosylation sites follow: Asn-557, Asn-562, and Asn-626. Ser-628 bears the Phosphoserine mark.

It belongs to the TDA7 family.

The protein localises to the vacuole membrane. In Saccharomyces cerevisiae (strain YJM789) (Baker's yeast), this protein is Topoisomerase I damage affected protein 7 (TDA7).